The following is a 327-amino-acid chain: MAWWKAWVEQEGVSVKGSSHFNPDPDAETLYKAMKGIGTNEQAIIDVLTKRSNVQRQQIAKSFKAQFGKDLTETLKSELSGKFERLIVALMYPPYSYEAKELHDAMKGLGTKEGVIIEILASRTKNQLREIMKAYEEDYGSTLEEDIQGDTSGYLERILVCLLQGSRDDVSGFVDPGLVLQDAQALHEAGEKIMGTDEMKFITILCTRSATHLMRVFEEYEKIANKCIEDSIKSETHGSLEEAMLTVVKCTRNVHSYFAERLYYAMKGAGTRDGTLIRNIVSRSEIDLNLIKGQFKKMYGKTLSSMIMADTSGYYKTALLNLVGTDL.

4 Annexin repeats span residues 21–92 (FNPD…ALMY), 93–164 (PPYS…CLLQ), 177–249 (GLVL…TVVK), and 253–324 (NVHS…NLVG). Ca(2+) contacts are provided by methionine 266, glycine 268, glycine 270, and aspartate 310.

The protein belongs to the annexin family.

This protein is an anticoagulant protein that acts as an indirect inhibitor of the thromboplastin-specific complex, which is involved in the blood coagulation cascade. The polypeptide is Annexin A8 (Anxa8) (Mus musculus (Mouse)).